A 295-amino-acid polypeptide reads, in one-letter code: Protease HtpX (295 aa).

2 consecutive transmembrane segments (helical) span residues Ile4–Leu24 and Gln42–Ser62. His147 provides a ligand contact to Zn(2+). Residue Glu148 is part of the active site. His151 lines the Zn(2+) pocket. 2 consecutive transmembrane segments (helical) span residues Val158–Ile178 and Ile199–Phe219. Residue Glu224 coordinates Zn(2+).

This sequence belongs to the peptidase M48B family. Zn(2+) is required as a cofactor.

The protein resides in the cell inner membrane. In Pseudomonas syringae pv. syringae (strain B728a), this protein is Protease HtpX.